A 238-amino-acid chain; its full sequence is Ribonuclease PH (238 aa).

Residues 66 to 88 (LPRSTHTRSDREAARGKQSGRTQ) are disordered. Phosphate is bound by residues arginine 86 and 124–126 (GTR).

It belongs to the RNase PH family. Homohexameric ring arranged as a trimer of dimers.

It catalyses the reaction tRNA(n+1) + phosphate = tRNA(n) + a ribonucleoside 5'-diphosphate. In terms of biological role, phosphorolytic 3'-5' exoribonuclease that plays an important role in tRNA 3'-end maturation. Removes nucleotide residues following the 3'-CCA terminus of tRNAs; can also add nucleotides to the ends of RNA molecules by using nucleoside diphosphates as substrates, but this may not be physiologically important. Probably plays a role in initiation of 16S rRNA degradation (leading to ribosome degradation) during starvation. The protein is Ribonuclease PH of Ralstonia pickettii (strain 12J).